Reading from the N-terminus, the 511-residue chain is MFS-type transporper mpsC (511 aa).

Positions 1-35 (MTSSTESKHSNDESTDLEKQDAEESHGLPEERKQD) are enriched in basic and acidic residues. Residues 1-65 (MTSSTESKHS…PDDPANPMNW (65 aa)) are disordered. The next 7 membrane-spanning stretches (helical) occupy residues 74–94 (VVMASLTTLFANITSTAFAPA), 108–128 (ITAALTVSIYLLGFAFGPLVI), 147–167 (ITVAFLIGCAQAKNLGMFLVF), 169–189 (LITGIAGSGPGTIGGGTIADV), 201–221 (AFAMGPLMGPVLGPLMSGFIA), 228–248 (WVFRVLCIATGVMTIVLYFVM), and 303–323 (PITLLLSLYCAFVFGLLILLF). A glycan (N-linked (GlcNAc...) asparagine) is linked at asparagine 337. 5 helical membrane-spanning segments follow: residues 342–362 (GLSYLGLGFGLAIGLVLFGML), 383–403 (LLLMVWFAPVIPGGFFWYGWT), 411–431 (ILPMMGTSLIGMGALMVMMPI), 443–465 (VAASALAANTLLRSLAGCFLPLA), and 476–496 (GWGNTLLGFIAIGFTCLPILF).

This sequence belongs to the major facilitator superfamily.

Its subcellular location is the membrane. In terms of biological role, MFS-type transporper; part of the gene cluster that mediates the biosynthesis of macrophasetins, 3-decalinoyltetramic acids (DTAs) which feature a tetramate (pyrrolidine-2,4-dione) unit connected to a decalin fragment and that have potent bioactivities. Efflux pump that might be required for efficient secretion of macrophasetins. In Macrophomina phaseolina (strain MS6) (Charcoal rot fungus), this protein is MFS-type transporper mpsC.